A 339-amino-acid polypeptide reads, in one-letter code: Protein RETICULATA-RELATED 2, chloroplastic (339 aa).

The N-terminal 58 residues, 1 to 58 (MAAMAAKLHISTKSDQSNVRLPRLINLSRDPTARVLFPRNGSVSSLHTNFSSPNIMVP), are a transit peptide targeting the chloroplast. Positions 68-86 (IGNHGGGSGSGGGGGGYGG) are enriched in gly residues. The disordered stretch occupies residues 68–92 (IGNHGGGSGSGGGGGGYGGSEEEES). The next 2 membrane-spanning stretches (helical) occupy residues 148 to 168 (FVFS…YLLA) and 213 to 233 (VFAT…NGLI).

This sequence belongs to the RETICULATA family.

It localises to the plastid. It is found in the chloroplast membrane. In terms of biological role, may play a role in leaf development. In Arabidopsis thaliana (Mouse-ear cress), this protein is Protein RETICULATA-RELATED 2, chloroplastic.